The primary structure comprises 94 residues: Large ribosomal subunit protein bL25 (94 aa).

This sequence belongs to the bacterial ribosomal protein bL25 family. Part of the 50S ribosomal subunit; part of the 5S rRNA/L5/L18/L25 subcomplex. Contacts the 5S rRNA. Binds to the 5S rRNA independently of L5 and L18.

Functionally, this is one of the proteins that binds to the 5S RNA in the ribosome where it forms part of the central protuberance. The chain is Large ribosomal subunit protein bL25 from Escherichia coli (strain K12 / DH10B).